A 300-amino-acid chain; its full sequence is UDP-N-acetylenolpyruvoylglucosamine reductase (300 aa).

Residues 28 to 190 (KIGGRVKYLV…TRAMMSFKKE (163 aa)) form the FAD-binding PCMH-type domain. Arginine 169 is an active-site residue. The Proton donor role is filled by serine 219. Glutamate 290 is an active-site residue.

Belongs to the MurB family. The cofactor is FAD.

The protein resides in the cytoplasm. It carries out the reaction UDP-N-acetyl-alpha-D-muramate + NADP(+) = UDP-N-acetyl-3-O-(1-carboxyvinyl)-alpha-D-glucosamine + NADPH + H(+). It participates in cell wall biogenesis; peptidoglycan biosynthesis. Cell wall formation. The polypeptide is UDP-N-acetylenolpyruvoylglucosamine reductase (Thermotoga sp. (strain RQ2)).